The primary structure comprises 117 residues: Ig heavy chain V region G4 (117 aa).

A signal peptide spans 1–19 (MTHWLCFTLALVAVRGVLS). The framework-1 stretch occupies residues 20–49 (EIQLVESGGAIRKPGDSLRLSCKASGFTFS). An intrachain disulfide couples cysteine 41 to cysteine 115. The complementarity-determining-1 stretch occupies residues 50–54 (DTWMA). Residues 55–68 (WARQPPGKGLQWVG) form a framework-2 region. Residues 69 to 85 (EINGNSETIRYAPEVKG) are complementarity-determining-2. A framework-3 region spans residues 86–117 (RLTISRDNTQNLLFLQISSLKPEDTATYYCAR).

This Caiman crocodilus (Spectacled caiman) protein is Ig heavy chain V region G4 (G4).